Reading from the N-terminus, the 637-residue chain is Interleukin-17 receptor E (637 aa).

The signal sequence occupies residues 1–23; sequence MGSPRLAALLLSLPLLLIGLAVS. Residues 24–414 are Extracellular-facing; the sequence is ARVACPCLRS…VLCPDVSHRH (391 aa). The disordered stretch occupies residues 87-134; sequence GSPSLSEESHRISIPSSAISHRGQRTKRAQPSAAEGREHLPEAGSQKC. N-linked (GlcNAc...) asparagine glycans are attached at residues Asn278 and Asn307. The helical transmembrane segment at 415-435 threads the bilayer; sequence LGLLILALLALTALVGVVLVL. Topologically, residues 436 to 637 are cytoplasmic; that stretch reads LGRRLLPGSG…TNSPCGFSCL (202 aa). The region spanning 447–583 is the SEFIR domain; the sequence is TRPVLLLHAA…LLRDLPRLLR (137 aa).

Forms heterodimers with IL17RA; the heterodimer binds IL17C. Predominantly expressed in mucosal tissues, including trachea, lung, kidney and stomach. Highly expressed in colon epithelial cells. Also expressed in testis. Low expression, if any, in heart, liver, spleen, or brain. Among CD4 T-helper cells, expressed at high levels in Th17 cells.

It is found in the cell membrane. The protein resides in the secreted. It localises to the cytoplasm. Its function is as follows. Specific functional receptor for IL17C, signaling through the NF-kappa-B and MAPK pathways. Requires TRAF3IP2 /ACT1 for signaling. Crucial regulator in innate immunity to bacterial pathogens, such as Citrobacter rodentium. Isoform 4 and isoform 5 may be either cytoplasmic inactive or dominant active forms. Isoform 2 and isoform 3 may act as soluble decoy receptors. The protein is Interleukin-17 receptor E (Il17re) of Mus musculus (Mouse).